Consider the following 79-residue polypeptide: CDC42 small effector protein 1-B (79 aa).

Residues cysteine 10 and cysteine 11 are each lipidated (S-palmitoyl cysteine). The CRIB domain occupies 30 to 43 (IGEPMNFVHLTHIG). The segment at 41–79 (HIGSGDMGASDGLPKAGTVQEQMRSKCGRDRQWSNSRVL) is disordered. A compositionally biased stretch (basic and acidic residues) spans 63–72 (MRSKCGRDRQ).

Belongs to the CDC42SE/SPEC family.

It is found in the cytoplasm. It localises to the cytoskeleton. Its subcellular location is the cell membrane. Functionally, probably involved in the organization of the actin cytoskeleton by acting downstream of CDC42, inducing actin filament assembly. This chain is CDC42 small effector protein 1-B (cdc42se1-b), found in Xenopus laevis (African clawed frog).